Here is a 673-residue protein sequence, read N- to C-terminus: Xyloglucan glycosyltransferase 4 (673 aa).

Transmembrane regions (helical) follow at residues 90-110 and 144-164; these read FIKA…VAHF and IAPL…IQSL. Aspartate 238 is an active-site residue. Substrate is bound by residues aspartate 297 and aspartate 299. Aspartate 391 is an active-site residue. 2 helical membrane-spanning segments follow: residues 469–489 and 494–514; these read LILP…TMFI and LPLW…ILPS. Serine 581 is subject to Phosphoserine. 2 consecutive transmembrane segments (helical) span residues 623–643 and 648–668; these read VFKK…RSFL and LHFY…LDLI.

The protein belongs to the glycosyltransferase 2 family. Plant cellulose synthase-like C subfamily. As to quaternary structure, homodimer. Interacts with XXT5. Interacts with FUT1, MUR3 and XLT2. Expressed in seedlings, roots, leaves, stems, flowers and seeds.

It is found in the golgi apparatus membrane. In terms of biological role, beta-1,4-glucan synthase rather involved in the synthesis of the xyloglucan backbone than cellulose. Seems to work simultaneously with xyloglucan 6-xylosyltransferase. Xyloglucan is a noncellulosic polysaccharides of plant cell wall and consists of a glucan backbone substituted by xylose, galactose and fucose. Associates with other xyloglucan-synthesizing enzymes to form multiprotein complexes for xyloglucan synthesis in the Golgi. The chain is Xyloglucan glycosyltransferase 4 from Arabidopsis thaliana (Mouse-ear cress).